Reading from the N-terminus, the 179-residue chain is MPSPALLCCCLVLLAGVGASRHQSTLSEDDCTHFPASLPHMLRELRAAFGRVKTFFQMKDKLDNILLTGSLLEDFKGYLGCQALSEMIQFYLEEVMPRAENHDPDIKDHVNSLGEKLKTLRLRLRRCHRFLPCENKSKAVEQVKSAFSKLQEKGVYKAMSEFDIFINYIETYMTMRMKI.

Positions methionine 1–alanine 19 are cleaved as a signal peptide. Intrachain disulfides connect cysteine 31/cysteine 127 and cysteine 81/cysteine 133. Asparagine 135 is a glycosylation site (N-linked (GlcNAc...) asparagine).

The protein belongs to the IL-10 family. In terms of assembly, homodimer. Interacts with IL10RA and IL10RB.

It localises to the secreted. Major immune regulatory cytokine that acts on many cells of the immune system where it has profound anti-inflammatory functions, limiting excessive tissue disruption caused by inflammation. Mechanistically, IL10 binds to its heterotetrameric receptor comprising IL10RA and IL10RB leading to JAK1 and STAT2-mediated phosphorylation of STAT3. In turn, STAT3 translocates to the nucleus where it drives expression of anti-inflammatory mediators. Targets antigen-presenting cells (APCs) such as macrophages and monocytes and inhibits their release of pro-inflammatory cytokines including granulocyte-macrophage colony-stimulating factor /GM-CSF, granulocyte colony-stimulating factor/G-CSF, IL-1 alpha, IL-1 beta, IL-6, IL-8 and TNF-alpha. Also interferes with antigen presentation by reducing the expression of MHC-class II and co-stimulatory molecules, thereby inhibiting their ability to induce T cell activation. In addition, controls the inflammatory response of macrophages by reprogramming essential metabolic pathways including mTOR signaling. The sequence is that of Interleukin-10 (IL10) from Vulpes vulpes (Red fox).